A 665-amino-acid polypeptide reads, in one-letter code: Protein Fe65 homolog (665 aa).

The span at 1-12 shows a compositional bias: basic and acidic residues; that stretch reads MREGTPRVRIEV. Disordered stretches follow at residues 1–43 and 90–111; these read MREG…DTAT and SRGYSSAGRGQKGRREEERRRN. Positions 14–24 are enriched in polar residues; it reads KGSNRPSQFVS. Composition is skewed to basic and acidic residues over residues 27 to 40 and 102 to 111; these read EEQRLQRVQSRDSD and GRREEERRRN. The 34-residue stretch at 233-266 folds into the WW domain; sequence KDLPPGWEKHEDPQGYSYYWHVDSGTIQRQPPPP. PID domains follow at residues 330-456 and 499-615; these read VRFA…RDIC and FLGV…VLDA.

As to quaternary structure, interacts (via PID 2 domain) with apl-1 (via cytoplasmic domain). Post-translationally, phosphorylated. In terms of tissue distribution, expressed in the pharynx (including pharyngeal muscle and nerve cells), ventral nerve cord and tail neurons.

It is found in the cytoplasm. The protein localises to the cytoskeleton. In terms of biological role, modulates pharyngeal pumping activity, at least in part by regulating expression of the acetylcholinesterase genes ace-1 and ace-2. The protein is Protein Fe65 homolog of Caenorhabditis elegans.